The primary structure comprises 156 residues: Small ribosomal subunit protein uS7 (156 aa).

The protein belongs to the universal ribosomal protein uS7 family. Part of the 30S ribosomal subunit. Contacts proteins S9 and S11.

One of the primary rRNA binding proteins, it binds directly to 16S rRNA where it nucleates assembly of the head domain of the 30S subunit. Is located at the subunit interface close to the decoding center, probably blocks exit of the E-site tRNA. The polypeptide is Small ribosomal subunit protein uS7 (Rhizorhabdus wittichii (strain DSM 6014 / CCUG 31198 / JCM 15750 / NBRC 105917 / EY 4224 / RW1) (Sphingomonas wittichii)).